Reading from the N-terminus, the 173-residue chain is Large ribosomal subunit protein uL16 (173 aa).

This sequence belongs to the universal ribosomal protein uL16 family.

In Methanococcus maripaludis (strain C5 / ATCC BAA-1333), this protein is Large ribosomal subunit protein uL16.